The primary structure comprises 615 residues: MFS-type transporter 1 (615 aa).

The segment at 1–85 (MTALAAVPDL…GNNVSPHGRH (85 aa)) is disordered. Over residues 16 to 53 (PSTTTVHSPNYSGSPADISSSPTTRAVSRNTARQTASA) the composition is skewed to polar residues. N25 is a glycosylation site (N-linked (GlcNAc...) asparagine). 6 consecutive transmembrane segments (helical) span residues 94–114 (CLVIATLSGVSFLNTMGSGIL), 138–158 (VYSLAAGCTLLVFGAVGHIIG), 162–182 (VWITGACLYAAFTLGVGRSAT), 192–212 (VLGVSIAMCLPTAVSLTTNGF), 222–242 (FAFQGMGQPLGYSTGLILGGI), and 251–271 (FGFYISGGINAVLAICALVVL). The N-linked (GlcNAc...) asparagine glycan is linked to N302. 8 helical membrane passes run 320–340 (WTGTLAISASMGFLSYVFSVV), 351–371 (QNIALLVAAALLLPTFTLWVG), 397–417 (AAVFFTWAVFNAFQYFSALYF), 432–452 (FLPMVLVGAATNIVTGYLVET), 455–475 (VRWLVVVSAIFSLFSPLIMAL), 488–508 (FAMLLSPLHPDVLFTVSNLII), 522–542 (AVFNAVSQVGNSVGLGLTAVV), and 585–605 (AAFWLMFGAAALVTVITFLGL).

The protein belongs to the major facilitator superfamily. EmrB family.

It localises to the membrane. In terms of biological role, MFS-type transporter; part of the gene cluster that mediates the biosynthesis of pyriculol and pyriculariol, two heptaketides that induce lesion formation upon application on rice leaves but are dispensable for pathogenicity. With the ABC transporter ABC7, is most likely responsible for pyriculol and pyriculariol secretion and thereby may contribute to intrinsic resistance. This is MFS-type transporter 1 from Pyricularia oryzae (strain 70-15 / ATCC MYA-4617 / FGSC 8958) (Rice blast fungus).